Here is a 109-residue protein sequence, read N- to C-terminus: Small ribosomal subunit protein uS17 (109 aa).

Belongs to the universal ribosomal protein uS17 family. Part of the 30S ribosomal subunit.

Its function is as follows. One of the primary rRNA binding proteins, it binds specifically to the 5'-end of 16S ribosomal RNA. The sequence is that of Small ribosomal subunit protein uS17 from Methanosarcina mazei (strain ATCC BAA-159 / DSM 3647 / Goe1 / Go1 / JCM 11833 / OCM 88) (Methanosarcina frisia).